Consider the following 107-residue polypeptide: uncharacterized protein (107 aa).

Polar residues predominate over residues 1–14; the sequence is MTERNASGRMNTKG. The interval 1–20 is disordered; the sequence is MTERNASGRMNTKGRSIKET.

Its subcellular location is the mitochondrion. This is an uncharacterized protein from Arabidopsis thaliana (Mouse-ear cress).